A 255-amino-acid chain; its full sequence is Indole-3-glycerol phosphate synthase (255 aa).

Belongs to the TrpC family.

It catalyses the reaction 1-(2-carboxyphenylamino)-1-deoxy-D-ribulose 5-phosphate + H(+) = (1S,2R)-1-C-(indol-3-yl)glycerol 3-phosphate + CO2 + H2O. The protein operates within amino-acid biosynthesis; L-tryptophan biosynthesis; L-tryptophan from chorismate: step 4/5. This is Indole-3-glycerol phosphate synthase from Streptococcus pneumoniae (strain Hungary19A-6).